We begin with the raw amino-acid sequence, 274 residues long: Diaminopimelate epimerase (274 aa).

Substrate contacts are provided by asparagine 11, glutamine 44, and asparagine 64. The Proton donor role is filled by cysteine 73. Substrate contacts are provided by residues 74–75 (GN), asparagine 157, asparagine 190, and 208–209 (ER). Residue cysteine 217 is the Proton acceptor of the active site. 218–219 (GS) is a substrate binding site.

The protein belongs to the diaminopimelate epimerase family. As to quaternary structure, homodimer.

The protein resides in the cytoplasm. It catalyses the reaction (2S,6S)-2,6-diaminopimelate = meso-2,6-diaminopimelate. The protein operates within amino-acid biosynthesis; L-lysine biosynthesis via DAP pathway; DL-2,6-diaminopimelate from LL-2,6-diaminopimelate: step 1/1. In terms of biological role, catalyzes the stereoinversion of LL-2,6-diaminopimelate (L,L-DAP) to meso-diaminopimelate (meso-DAP), a precursor of L-lysine and an essential component of the bacterial peptidoglycan. In Salmonella agona (strain SL483), this protein is Diaminopimelate epimerase.